A 122-amino-acid polypeptide reads, in one-letter code: Small ribosomal subunit protein uS13 (122 aa).

Positions Arg-99 to Lys-122 are disordered.

This sequence belongs to the universal ribosomal protein uS13 family. As to quaternary structure, part of the 30S ribosomal subunit. Forms a loose heterodimer with protein S19. Forms two bridges to the 50S subunit in the 70S ribosome.

Functionally, located at the top of the head of the 30S subunit, it contacts several helices of the 16S rRNA. In the 70S ribosome it contacts the 23S rRNA (bridge B1a) and protein L5 of the 50S subunit (bridge B1b), connecting the 2 subunits; these bridges are implicated in subunit movement. Contacts the tRNAs in the A and P-sites. This is Small ribosomal subunit protein uS13 from Rhizobium leguminosarum bv. trifolii (strain WSM2304).